We begin with the raw amino-acid sequence, 441 residues long: Ribosomal protein uS12 methylthiotransferase RimO (441 aa).

The region spanning 6 to 116 (PKVGFVSLGC…VMTAVHANLP (111 aa)) is the MTTase N-terminal domain. C15, C51, C80, C147, C151, and C154 together coordinate [4Fe-4S] cluster. Residues 133 to 370 (LTPQHYAYLK…MEVQESISAE (238 aa)) enclose the Radical SAM core domain. The TRAM domain occupies 373-439 (RRKIGRIETV…GHDLWAAPPA (67 aa)).

It belongs to the methylthiotransferase family. RimO subfamily. [4Fe-4S] cluster is required as a cofactor.

The protein resides in the cytoplasm. The catalysed reaction is L-aspartate(89)-[ribosomal protein uS12]-hydrogen + (sulfur carrier)-SH + AH2 + 2 S-adenosyl-L-methionine = 3-methylsulfanyl-L-aspartate(89)-[ribosomal protein uS12]-hydrogen + (sulfur carrier)-H + 5'-deoxyadenosine + L-methionine + A + S-adenosyl-L-homocysteine + 2 H(+). Functionally, catalyzes the methylthiolation of an aspartic acid residue of ribosomal protein uS12. The sequence is that of Ribosomal protein uS12 methylthiotransferase RimO from Methylobacillus flagellatus (strain ATCC 51484 / DSM 6875 / VKM B-1610 / KT).